The following is an 81-amino-acid chain: ATP synthase subunit c, chloroplastic (81 aa).

The next 2 helical transmembrane spans lie at 3–23 and 57–77; these read PLIS…ASIG and LAFM…LLFA.

It belongs to the ATPase C chain family. As to quaternary structure, F-type ATPases have 2 components, F(1) - the catalytic core - and F(0) - the membrane proton channel. F(1) has five subunits: alpha(3), beta(3), gamma(1), delta(1), epsilon(1). F(0) has four main subunits: a(1), b(1), b'(1) and c(10-14). The alpha and beta chains form an alternating ring which encloses part of the gamma chain. F(1) is attached to F(0) by a central stalk formed by the gamma and epsilon chains, while a peripheral stalk is formed by the delta, b and b' chains.

The protein localises to the plastid. Its subcellular location is the chloroplast thylakoid membrane. Its function is as follows. F(1)F(0) ATP synthase produces ATP from ADP in the presence of a proton or sodium gradient. F-type ATPases consist of two structural domains, F(1) containing the extramembraneous catalytic core and F(0) containing the membrane proton channel, linked together by a central stalk and a peripheral stalk. During catalysis, ATP synthesis in the catalytic domain of F(1) is coupled via a rotary mechanism of the central stalk subunits to proton translocation. Key component of the F(0) channel; it plays a direct role in translocation across the membrane. A homomeric c-ring of between 10-14 subunits forms the central stalk rotor element with the F(1) delta and epsilon subunits. This is ATP synthase subunit c, chloroplastic from Ceratophyllum demersum (Rigid hornwort).